The chain runs to 336 residues: Holliday junction branch migration complex subunit RuvB (336 aa).

The large ATPase domain (RuvB-L) stretch occupies residues 1–182 (MKERIVNLET…FGMSFRMQFY (182 aa)). Residues L21, R22, G63, K66, T67, S68, 129-131 (EDF), R172, Y182, and R219 contribute to the ATP site. Mg(2+) is bound at residue T67. The small ATPAse domain (RuvB-S) stretch occupies residues 183–253 (SPSELALIIK…ITLHALNELG (71 aa)). Residues 256 to 336 (ELGFDEADLA…IPTLNPQTLF (81 aa)) are head domain (RuvB-H). R310 and R315 together coordinate DNA.

This sequence belongs to the RuvB family. Homohexamer. Forms an RuvA(8)-RuvB(12)-Holliday junction (HJ) complex. HJ DNA is sandwiched between 2 RuvA tetramers; dsDNA enters through RuvA and exits via RuvB. An RuvB hexamer assembles on each DNA strand where it exits the tetramer. Each RuvB hexamer is contacted by two RuvA subunits (via domain III) on 2 adjacent RuvB subunits; this complex drives branch migration. In the full resolvosome a probable DNA-RuvA(4)-RuvB(12)-RuvC(2) complex forms which resolves the HJ.

It is found in the cytoplasm. The catalysed reaction is ATP + H2O = ADP + phosphate + H(+). The RuvA-RuvB-RuvC complex processes Holliday junction (HJ) DNA during genetic recombination and DNA repair, while the RuvA-RuvB complex plays an important role in the rescue of blocked DNA replication forks via replication fork reversal (RFR). RuvA specifically binds to HJ cruciform DNA, conferring on it an open structure. The RuvB hexamer acts as an ATP-dependent pump, pulling dsDNA into and through the RuvAB complex. RuvB forms 2 homohexamers on either side of HJ DNA bound by 1 or 2 RuvA tetramers; 4 subunits per hexamer contact DNA at a time. Coordinated motions by a converter formed by DNA-disengaged RuvB subunits stimulates ATP hydrolysis and nucleotide exchange. Immobilization of the converter enables RuvB to convert the ATP-contained energy into a lever motion, pulling 2 nucleotides of DNA out of the RuvA tetramer per ATP hydrolyzed, thus driving DNA branch migration. The RuvB motors rotate together with the DNA substrate, which together with the progressing nucleotide cycle form the mechanistic basis for DNA recombination by continuous HJ branch migration. Branch migration allows RuvC to scan DNA until it finds its consensus sequence, where it cleaves and resolves cruciform DNA. The protein is Holliday junction branch migration complex subunit RuvB of Helicobacter pylori (strain Shi470).